We begin with the raw amino-acid sequence, 552 residues long: Glutamine-dependent NAD(+) synthetase (552 aa).

A CN hydrolase domain is found at 5 to 245; that stretch reads FRITLAQLNP…EAVVHVDLER (241 aa). Glutamate 45 acts as the Proton acceptor; for glutaminase activity in catalysis. Lysine 113 (for glutaminase activity) is an active-site residue. Cysteine 149 functions as the Nucleophile; for glutaminase activity in the catalytic mechanism. The L-glutamine site is built by serine 175 and lysine 181. The segment at 275–552 is ligase; the sequence is LQDYLRKSGF…PMVNRWRDQS (278 aa). 290–297 serves as a coordination point for ATP; that stretch reads GLSGGIDS. Residue asparagine 373 participates in deamido-NAD(+) binding. An ATP-binding site is contributed by threonine 397. Glutamate 402 and lysine 521 together coordinate deamido-NAD(+).

This sequence in the C-terminal section; belongs to the NAD synthetase family.

It catalyses the reaction deamido-NAD(+) + L-glutamine + ATP + H2O = L-glutamate + AMP + diphosphate + NAD(+) + H(+). Its pathway is cofactor biosynthesis; NAD(+) biosynthesis; NAD(+) from deamido-NAD(+) (L-Gln route): step 1/1. Its function is as follows. Catalyzes the ATP-dependent amidation of deamido-NAD to form NAD. Uses L-glutamine as a nitrogen source. The polypeptide is Glutamine-dependent NAD(+) synthetase (Rhodobacter capsulatus (Rhodopseudomonas capsulata)).